We begin with the raw amino-acid sequence, 556 residues long: Glutamine--tRNA ligase (556 aa).

The 'HIGH' region motif lies at 33-43 (PEPNGYLHIGH). Residues 34–36 (EPN) and 40–46 (HIGHAKS) each bind ATP. The L-glutamine site is built by aspartate 66 and tyrosine 210. Residues threonine 229, 259–260 (RL), and 267–269 (MSK) each bind ATP. The short motif at 266–270 (VMSKR) is the 'KMSKS' region element.

It belongs to the class-I aminoacyl-tRNA synthetase family. As to quaternary structure, monomer.

The protein resides in the cytoplasm. The enzyme catalyses tRNA(Gln) + L-glutamine + ATP = L-glutaminyl-tRNA(Gln) + AMP + diphosphate. This chain is Glutamine--tRNA ligase, found in Clostridium kluyveri (strain ATCC 8527 / DSM 555 / NBRC 12016 / NCIMB 10680 / K1).